The following is a 327-amino-acid chain: Probable cell division protein WhiA (327 aa).

Positions 275–308 form a DNA-binding region, H-T-H motif; sequence SLEELGRLADPQMTKDAVAGRIRRLLTMADKRAE.

This sequence belongs to the WhiA family.

Functionally, involved in cell division and chromosome segregation. The chain is Probable cell division protein WhiA from Corynebacterium glutamicum (strain ATCC 13032 / DSM 20300 / JCM 1318 / BCRC 11384 / CCUG 27702 / LMG 3730 / NBRC 12168 / NCIMB 10025 / NRRL B-2784 / 534).